Consider the following 185-residue polypeptide: UPF0301 protein Tbd_2579 (185 aa).

Belongs to the UPF0301 (AlgH) family.

The polypeptide is UPF0301 protein Tbd_2579 (Thiobacillus denitrificans (strain ATCC 25259 / T1)).